The primary structure comprises 162 residues: MPDKDAIFGGEHPSTIDSKGRTCIPARFREALVQAFADERFVMTKARPISLGGERYARGLSVYPLSAWNDIKRRALANEGGYTSTQLDSIKRQFLNPAVECLADKLGRVLIPPSLRSHAGLERELWFVGMDGRFDIWSRDTYDRVNDQDEQNLPADLTAIGF.

2 SpoVT-AbrB domains span residues 11 to 62 (EHPS…GLSV) and 98 to 141 (AVEC…SRDT).

The protein belongs to the MraZ family. Forms oligomers.

The protein localises to the cytoplasm. Its subcellular location is the nucleoid. This chain is Transcriptional regulator MraZ, found in Pelobacter propionicus (strain DSM 2379 / NBRC 103807 / OttBd1).